The chain runs to 86 residues: MALLEFFRPQKKATANIAKERLQIIVAERRNGGPAPSYLPQLKEDILKVISKYVNVSPDMITVSLEQKEEDLSVLELNITLPEDDN.

The protein belongs to the MinE family.

In terms of biological role, prevents the cell division inhibition by proteins MinC and MinD at internal division sites while permitting inhibition at polar sites. This ensures cell division at the proper site by restricting the formation of a division septum at the midpoint of the long axis of the cell. The chain is Cell division topological specificity factor from Aliivibrio salmonicida (strain LFI1238) (Vibrio salmonicida (strain LFI1238)).